The chain runs to 454 residues: MERKDFETWLDNISVTFLSLTDLQKNETLDHLISLSGAVQLRHLSNNLETLLKRDFLKLLPLELSFYLLKWLDPQTLLTCCLVSKQWNKVISACTEVWQTACKNLGWQIDDSVQDALHWKKVYLKAILRMKQLEDHEAFETSSLIGHSARVYALYYKDGLLCTGSDDLSAKLWDVSTGQCVYGIQTHTCAAVKFDEQKLVTGSFDNTVACWEWSSGARTQHFRGHTGAVFSVDYNDELDILVSGSADFTVKVWALSAGTCLNTLTGHTEWVTKVVLQKCKVKSLLHSPGDYILLSADKYEIKIWPIGREINCKCLKTLSVSEDRSICLQPRLHFDGKYIVCSSALGLYQWDFASYDILRVIKTPEIANLALLGFGDIFALLFDNRYLYIMDLRTESLISRWPLPEYRKSKRGSSFLAGEASWLNGLDGHNDTGLVFATSMPDHSIHLVLWKEHG.

Residues 54-101 (RDFLKLLPLELSFYLLKWLDPQTLLTCCLVSKQWNKVISACTEVWQTA) form the F-box domain. WD repeat units follow at residues 139–175 (FETS…LWDV), 179–213 (QCVY…CWEW), 217–255 (ARTQ…VWAL), 259–306 (TCLN…IWPI), 313–352 (KCLK…QWDF), 364–403 (PEIA…RWPL), and 410–452 (KRGS…LWKE). At lysine 298 the chain carries N6-acetyllysine.

Directly interacts with SKP1 and CUL1.

Functionally, substrate-recognition component of the SCF (SKP1-CUL1-F-box protein)-type E3 ubiquitin ligase complex. The polypeptide is F-box/WD repeat-containing protein 2 (FBXW2) (Homo sapiens (Human)).